The chain runs to 426 residues: Enolase (426 aa).

A (2R)-2-phosphoglycerate-binding site is contributed by glutamine 163. Glutamate 205 functions as the Proton donor in the catalytic mechanism. Positions 242, 286, and 313 each coordinate Mg(2+). (2R)-2-phosphoglycerate is bound by residues lysine 338, arginine 367, serine 368, and lysine 389. The Proton acceptor role is filled by lysine 338.

It belongs to the enolase family. Mg(2+) serves as cofactor.

It is found in the cytoplasm. The protein localises to the secreted. It localises to the cell surface. It catalyses the reaction (2R)-2-phosphoglycerate = phosphoenolpyruvate + H2O. Its pathway is carbohydrate degradation; glycolysis; pyruvate from D-glyceraldehyde 3-phosphate: step 4/5. In terms of biological role, catalyzes the reversible conversion of 2-phosphoglycerate (2-PG) into phosphoenolpyruvate (PEP). It is essential for the degradation of carbohydrates via glycolysis. In Helicobacter pylori (strain Shi470), this protein is Enolase.